Consider the following 318-residue polypeptide: Galactofuranose-binding protein YtfQ (318 aa).

A signal peptide spans Met-1–Ala-21. Beta-D-galactofuranose-binding positions include Glu-34–Arg-38, Asp-111–Arg-112, Arg-167, Asn-220, and Asp-248. The cysteines at positions 150 and 214 are disulfide-linked.

It belongs to the bacterial solute-binding protein 2 family. As to quaternary structure, the complex is composed of two ATP-binding proteins (YtfR), two transmembrane proteins (YtfT and YjfF) and a solute-binding protein (YtfQ).

It localises to the periplasm. Its function is as follows. Part of the ABC transporter complex YtfQRT-YjfF involved in galactofuranose transport. Binds to both alpha- and beta-galactofuranose. This is Galactofuranose-binding protein YtfQ (ytfQ) from Escherichia coli (strain K12).